The primary structure comprises 582 residues: Formate--tetrahydrofolate ligase (582 aa).

Residue 65–72 (TPLGEGKT) coordinates ATP.

It belongs to the formate--tetrahydrofolate ligase family.

The enzyme catalyses (6S)-5,6,7,8-tetrahydrofolate + formate + ATP = (6R)-10-formyltetrahydrofolate + ADP + phosphate. It functions in the pathway one-carbon metabolism; tetrahydrofolate interconversion. This is Formate--tetrahydrofolate ligase from Aliivibrio fischeri (strain ATCC 700601 / ES114) (Vibrio fischeri).